The sequence spans 346 residues: S-adenosylmethionine:tRNA ribosyltransferase-isomerase (346 aa).

The protein belongs to the QueA family. As to quaternary structure, monomer.

Its subcellular location is the cytoplasm. The catalysed reaction is 7-aminomethyl-7-carbaguanosine(34) in tRNA + S-adenosyl-L-methionine = epoxyqueuosine(34) in tRNA + adenine + L-methionine + 2 H(+). The protein operates within tRNA modification; tRNA-queuosine biosynthesis. In terms of biological role, transfers and isomerizes the ribose moiety from AdoMet to the 7-aminomethyl group of 7-deazaguanine (preQ1-tRNA) to give epoxyqueuosine (oQ-tRNA). This chain is S-adenosylmethionine:tRNA ribosyltransferase-isomerase, found in Shewanella denitrificans (strain OS217 / ATCC BAA-1090 / DSM 15013).